The chain runs to 233 residues: Large ribosomal subunit protein uL1 (233 aa).

This sequence belongs to the universal ribosomal protein uL1 family. In terms of assembly, part of the 50S ribosomal subunit.

Functionally, binds directly to 23S rRNA. The L1 stalk is quite mobile in the ribosome, and is involved in E site tRNA release. Its function is as follows. Protein L1 is also a translational repressor protein, it controls the translation of the L11 operon by binding to its mRNA. This Rhizobium etli (strain CIAT 652) protein is Large ribosomal subunit protein uL1.